The chain runs to 685 residues: Phenoloxidase subunit 1 (685 aa).

Histidine 209, histidine 213, and histidine 239 together coordinate Cu cation. Catalysis depends on glutamate 351, which acts as the Proton acceptor. 3 residues coordinate Cu cation: histidine 366, histidine 370, and histidine 406. Disulfide bonds link cysteine 580–cysteine 622 and cysteine 582–cysteine 629.

In terms of assembly, heterodimer. Forms a complex with an interleukin 1-like protein as a consequence of a host defense response. Cu(2+) serves as cofactor. Post-translationally, the N-terminus is blocked. As to expression, synthesized by oenocytoids, a type of hemocyte, and released into the hemolymph plasma.

Its subcellular location is the secreted. It carries out the reaction 2 L-dopa + O2 = 2 L-dopaquinone + 2 H2O. The enzyme catalyses L-tyrosine + O2 = L-dopaquinone + H2O. With respect to regulation, activated by immulectin and lipopolysaccharide. Functionally, this is a copper-containing oxidase that functions in the formation of pigments such as melanins and other polyphenolic compounds. Catalyzes the rate-limiting conversions of tyrosine to DOPA, DOPA to DOPA-quinone and possibly 5,6 dihydroxyindole to indole-5'6 quinone. Binds to the surface of hemocytes and is involved in hemocyte melanization. The protein is Phenoloxidase subunit 1 of Manduca sexta (Tobacco hawkmoth).